A 305-amino-acid chain; its full sequence is Oxygen-dependent coproporphyrinogen-III oxidase (305 aa).

Substrate is bound at residue Ser-98. 2 residues coordinate a divalent metal cation: His-102 and His-112. His-112 acts as the Proton donor in catalysis. 114–116 lines the substrate pocket; sequence NVR. A divalent metal cation contacts are provided by His-151 and His-181. An important for dimerization region spans residues 246 to 281; the sequence is YVEFNLVYDRGTLFGLQSGGRTESILMSMPPLARWE. 264 to 266 is a binding site for substrate; that stretch reads GGR.

It belongs to the aerobic coproporphyrinogen-III oxidase family. As to quaternary structure, homodimer. A divalent metal cation is required as a cofactor.

The protein localises to the cytoplasm. It catalyses the reaction coproporphyrinogen III + O2 + 2 H(+) = protoporphyrinogen IX + 2 CO2 + 2 H2O. It functions in the pathway porphyrin-containing compound metabolism; protoporphyrin-IX biosynthesis; protoporphyrinogen-IX from coproporphyrinogen-III (O2 route): step 1/1. Its function is as follows. Involved in the heme biosynthesis. Catalyzes the aerobic oxidative decarboxylation of propionate groups of rings A and B of coproporphyrinogen-III to yield the vinyl groups in protoporphyrinogen-IX. The sequence is that of Oxygen-dependent coproporphyrinogen-III oxidase from Vibrio campbellii (strain ATCC BAA-1116).